The chain runs to 149 residues: Nucleoside diphosphate kinase (149 aa).

6 residues coordinate ATP: K9, F57, R85, T91, R102, and N112. H115 serves as the catalytic Pros-phosphohistidine intermediate.

Belongs to the NDK family. As to quaternary structure, homotetramer. Mg(2+) is required as a cofactor.

Its subcellular location is the cytoplasm. It catalyses the reaction a 2'-deoxyribonucleoside 5'-diphosphate + ATP = a 2'-deoxyribonucleoside 5'-triphosphate + ADP. It carries out the reaction a ribonucleoside 5'-diphosphate + ATP = a ribonucleoside 5'-triphosphate + ADP. Functionally, major role in the synthesis of nucleoside triphosphates other than ATP. The ATP gamma phosphate is transferred to the NDP beta phosphate via a ping-pong mechanism, using a phosphorylated active-site intermediate. In Desulfitobacterium hafniense (strain DSM 10664 / DCB-2), this protein is Nucleoside diphosphate kinase.